Reading from the N-terminus, the 1128-residue chain is Major DNA-binding protein (1128 aa).

Residues 1104–1128 form a required for nuclear localization region; that stretch reads LGGGGQGSGGRRKRRLATVLPGLEV.

Belongs to the herpesviridae major DNA-binding protein family. Homooligomers. Forms double-helical filaments necessary for the formation of replication compartments within the host nucleus. Interacts with the origin-binding protein. Interacts with the helicase primase complex; this interaction stimulates primer synthesis activity of the helicase-primase complex. Interacts with the DNA polymerase. Interacts with the alkaline exonuclease; this interaction increases its nuclease processivity.

It localises to the virion tegument. The protein localises to the host nucleus. Its function is as follows. Plays several crucial roles in viral infection. Participates in the opening of the viral DNA origin to initiate replication by interacting with the origin-binding protein. May disrupt loops, hairpins and other secondary structures present on ssDNA to reduce and eliminate pausing of viral DNA polymerase at specific sites during elongation. Promotes viral DNA recombination by performing strand-transfer, characterized by the ability to transfer a DNA strand from a linear duplex to a complementary single-stranded DNA circle. Can also catalyze the renaturation of complementary single strands. Additionally, reorganizes the host cell nucleus, leading to the formation of prereplicative sites and replication compartments. This process is driven by the protein which can form double-helical filaments in the absence of DNA. This is Major DNA-binding protein from Homo sapiens (Human).